The primary structure comprises 392 residues: tRNA (guanine(6)-N2)-methyltransferase (392 aa).

Residues 73 to 183 (SAIPLLNHFS…DSELFVGVDT (111 aa)) form the THUMP domain. Residues 199–203 (HPAHL), 230–232 (SGT), Glu-275, 303–304 (DA), and Asn-317 each bind S-adenosyl-L-methionine.

The protein belongs to the methyltransferase superfamily.

The protein resides in the cytoplasm. The catalysed reaction is guanosine(6) in tRNA + S-adenosyl-L-methionine = N(2)-methylguanosine(6) in tRNA + S-adenosyl-L-homocysteine + H(+). S-adenosyl-L-methionine-dependent methyltransferase that catalyzes the methylation of the guanosine nucleotide at position 6 (m2G6) in tRNA. This Archaeoglobus fulgidus (strain ATCC 49558 / DSM 4304 / JCM 9628 / NBRC 100126 / VC-16) protein is tRNA (guanine(6)-N2)-methyltransferase.